The sequence spans 440 residues: Ultraviolet-B receptor UVR8 (440 aa).

At Ala2 the chain carries N-acetylalanine. RCC1 repeat units follow at residues 2-31 (AEDM…VALL), 32-84 (SGDI…AYSQ), 86-137 (GMEV…AVTM), 139-189 (GEVQ…AVTE), 190-241 (DGDL…SVSY), 243-293 (GALY…ALTS), 294-345 (DGKL…AVTE), and 347-399 (NNVF…SGKS). The tract at residues 397 to 423 (GKSWVSPAERYAVVPDETGLTDGSSKG) is required for interaction with COP1. The disordered stretch occupies residues 413–440 (ETGLTDGSSKGNGGDISVPQTDVKRVRI).

As to quaternary structure, homodimer in the absence of UV-B, but absorption of UV-B induces monomerization of UVR8 and interaction with COP1. Interacts with RUP1, RUP2 and histone H2B.

The protein localises to the nucleus. It localises to the cytoplasm. Its subcellular location is the cytosol. Its function is as follows. UV-B specific signaling component that acts as a UV-B photoreceptor and plays a key role in establishing UV-protective responses in plants. Upon UV-B irradiation, UVR8 undergoes an immediate switch from homodimer to monomer, accumulates in the nucleus, interacts with the photomorphogenic repressor COP1 and regulates the expression of the transcription factor HY5 by associating with chromatin (through histone H2B binding) in the HY5 promoter region. UVR8 is involved in controlling aspects of leaf growth and morphogenesis in response to UV-B, is required for normal progression of endocycle and has a regulatory role in stomatal differentiation. Is required for plant circadian clock response to photomorphogenic UV-B light, partly through the transcriptional activation of responsive clock genes. Promotes photosynthetic efficiency at elevated levels of UV-B. Plays a role in mediating the effects of UV-B radiation on pathogen resistance by controlling the expression of the sinapate biosynthetic pathway. The two tryptophans, Trp-285 and Trp-233, serve collectively as the UV-B chromophore. The polypeptide is Ultraviolet-B receptor UVR8 (Arabidopsis thaliana (Mouse-ear cress)).